The primary structure comprises 408 residues: ATP phosphoribosyltransferase regulatory subunit (408 aa).

Belongs to the class-II aminoacyl-tRNA synthetase family. HisZ subfamily. Heteromultimer composed of HisG and HisZ subunits.

Its subcellular location is the cytoplasm. The protein operates within amino-acid biosynthesis; L-histidine biosynthesis; L-histidine from 5-phospho-alpha-D-ribose 1-diphosphate: step 1/9. In terms of biological role, required for the first step of histidine biosynthesis. May allow the feedback regulation of ATP phosphoribosyltransferase activity by histidine. This Thermosynechococcus vestitus (strain NIES-2133 / IAM M-273 / BP-1) protein is ATP phosphoribosyltransferase regulatory subunit.